We begin with the raw amino-acid sequence, 283 residues long: Probable protein phosphatase 2C 17 (283 aa).

The region spanning 32–282 (KYGFSLIKGK…DDISCIVVRF (251 aa)) is the PPM-type phosphatase domain. Positions 69, 70, 234, and 273 each coordinate Mn(2+).

This sequence belongs to the PP2C family. It depends on Mg(2+) as a cofactor. Requires Mn(2+) as cofactor.

It carries out the reaction O-phospho-L-seryl-[protein] + H2O = L-seryl-[protein] + phosphate. It catalyses the reaction O-phospho-L-threonyl-[protein] + H2O = L-threonyl-[protein] + phosphate. The sequence is that of Probable protein phosphatase 2C 17 from Arabidopsis thaliana (Mouse-ear cress).